The following is a 239-amino-acid chain: Norbelladine 4'-O-methyltransferase 4 (239 aa).

S-adenosyl-L-methionine is bound by residues Val-55, Glu-77, 79 to 80 (GV), Ser-85, Asp-103, and Ala-132. Residue Asp-155 coordinates a divalent metal cation. Asp-157 contributes to the S-adenosyl-L-methionine binding site. A divalent metal cation contacts are provided by Asp-181 and Asn-182.

It belongs to the class I-like SAM-binding methyltransferase superfamily. Cation-dependent O-methyltransferase family. Mg(2+) serves as cofactor.

The enzyme catalyses norbelladine + S-adenosyl-L-methionine = 4'-O-methylnorbelladine + S-adenosyl-L-homocysteine + H(+). The protein operates within alkaloid biosynthesis. Its function is as follows. 4'-O-methyltransferase converting norbelladine to 4'-O-methylnorbelladine. 4'-O-methylnorbelladine is a precursor to all Amaryllidaceae alkaloids such as galanthamine, lycorine and haemanthamine, and including haemanthamine- and crinamine-type alkaloids, promising anticancer agents. The protein is Norbelladine 4'-O-methyltransferase 4 of Narcissus aff. pseudonarcissus MK-2014 (Daffodil).